Reading from the N-terminus, the 246-residue chain is Putative 4'-phosphopantetheinyl transferase slr0495 (246 aa).

Mg(2+)-binding residues include aspartate 110 and glutamate 156.

It belongs to the P-Pant transferase superfamily. Gsp/Sfp/HetI/AcpT family. It depends on Mg(2+) as a cofactor.

In terms of biological role, probably transfers the 4'-phosphopantetheine moiety from coenzyme A (CoA) to a serine residue of a carrier protein domain. This is Putative 4'-phosphopantetheinyl transferase slr0495 from Synechocystis sp. (strain ATCC 27184 / PCC 6803 / Kazusa).